The primary structure comprises 356 residues: Protein RecA (356 aa).

69 to 76 (GPESSGKT) provides a ligand contact to ATP.

The protein belongs to the RecA family.

The protein localises to the cytoplasm. In terms of biological role, can catalyze the hydrolysis of ATP in the presence of single-stranded DNA, the ATP-dependent uptake of single-stranded DNA by duplex DNA, and the ATP-dependent hybridization of homologous single-stranded DNAs. It interacts with LexA causing its activation and leading to its autocatalytic cleavage. In Gloeothece citriformis (strain PCC 7424) (Cyanothece sp. (strain PCC 7424)), this protein is Protein RecA.